Consider the following 203-residue polypeptide: Recombination protein RecR (203 aa).

The C4-type zinc finger occupies 56–71 (CAVCGNVSDDERCRIC). The 101-residue stretch at 79-179 (SVVCVVEEPK…TVTRIASGLP (101 aa)) folds into the Toprim domain.

It belongs to the RecR family.

Functionally, may play a role in DNA repair. It seems to be involved in an RecBC-independent recombinational process of DNA repair. It may act with RecF and RecO. The sequence is that of Recombination protein RecR from Mycobacterium avium (strain 104).